The chain runs to 270 residues: NADPH-dependent 7-cyano-7-deazaguanine reductase (270 aa).

79–81 (IES) is a binding site for substrate. 81–82 (SK) lines the NADPH pocket. Cysteine 177 acts as the Thioimide intermediate in catalysis. Aspartate 184 functions as the Proton donor in the catalytic mechanism. Residue 216–217 (HE) participates in substrate binding. 245-246 (RG) contacts NADPH.

It belongs to the GTP cyclohydrolase I family. QueF type 2 subfamily. As to quaternary structure, homodimer.

Its subcellular location is the cytoplasm. The enzyme catalyses 7-aminomethyl-7-carbaguanine + 2 NADP(+) = 7-cyano-7-deazaguanine + 2 NADPH + 3 H(+). It functions in the pathway tRNA modification; tRNA-queuosine biosynthesis. Catalyzes the NADPH-dependent reduction of 7-cyano-7-deazaguanine (preQ0) to 7-aminomethyl-7-deazaguanine (preQ1). This is NADPH-dependent 7-cyano-7-deazaguanine reductase from Acinetobacter baumannii (strain ACICU).